We begin with the raw amino-acid sequence, 690 residues long: Calpain-9 (690 aa).

Positions 1–24 (MPYLHRSLRPQPQPVPRDARTVHS) are disordered. A Calpain catalytic domain is found at 42-337 (LFEDADFPAS…FDKVEICNLT (296 aa)). Positions 81, 83, and 88 each coordinate Ca(2+). Cys97 is an active-site residue. Glu167 serves as a coordination point for Ca(2+). Catalysis depends on residues His254 and Asn278. Residues Glu284, Asp291, Leu312, Asp314, and Glu316 each contribute to the Ca(2+) site. The tract at residues 338–521 (PDALEDNTLH…PQEEETEEER (184 aa)) is domain III. The segment at 522–690 (QFRALFRRIA…NEFINLTMNI (169 aa)) is domain IV. EF-hand domains follow at residues 534 to 552 (DMEV…VLQK), 561 to 589 (LSLL…FRVF), and 591 to 626 (DKLR…AGFQ). Residues Asp574, Ser576, Asn578, Lys580, Glu585, Asp604, Asp606, Ser608, Thr610, and Glu615 each coordinate Ca(2+).

Belongs to the peptidase C2 family. Predominantly expressed in stomach and small intestine, although low levels of expression in other organs.

Functionally, calcium-regulated non-lysosomal thiol-protease. This Rattus norvegicus (Rat) protein is Calpain-9 (Capn9).